The following is a 353-amino-acid chain: UPF0283 membrane protein KPK_3110 (353 aa).

3 consecutive transmembrane segments (helical) span residues 70-90, 99-119, and 213-233; these read MVSAGLAIFGVSVVAQGVQWT, WIALGGCVAGALIVGAGVGSV, and ESTLMIAVSPLALVDMAFIAW.

The protein belongs to the UPF0283 family.

It is found in the cell inner membrane. The sequence is that of UPF0283 membrane protein KPK_3110 from Klebsiella pneumoniae (strain 342).